We begin with the raw amino-acid sequence, 263 residues long: HTH-type transcriptional regulator KdgR (263 aa).

The 62-residue stretch at 13 to 74 (VSSVLKVFGI…GESEKYSLTL (62 aa)) folds into the HTH iclR-type domain. A DNA-binding region (H-T-H motif) is located at residues 34–53 (ITELSQRVMMSKSTVYRFLQ). The region spanning 89–258 (LIRSADIQMR…ARKISAQMGY (170 aa)) is the IclR-ED domain.

It is found in the cytoplasm. In terms of biological role, transcriptional repressor that negatively regulates the expression of kdgT, kdgK and kdgA, which encode proteins involved in transport and catabolism of 2-keto-3-deoxygluconate (KDG). Also represses expression of eda, which encodes the Entner-Doudoroff aldolase, by binding to its P2 promoter region. In Escherichia coli (strain K12), this protein is HTH-type transcriptional regulator KdgR.